The sequence spans 502 residues: ATP synthase subunit alpha (502 aa).

169–176 (GDRQTGKT) contacts ATP.

It belongs to the ATPase alpha/beta chains family. F-type ATPases have 2 components, CF(1) - the catalytic core - and CF(0) - the membrane proton channel. CF(1) has five subunits: alpha(3), beta(3), gamma(1), delta(1), epsilon(1). CF(0) has three main subunits: a(1), b(2) and c(9-12). The alpha and beta chains form an alternating ring which encloses part of the gamma chain. CF(1) is attached to CF(0) by a central stalk formed by the gamma and epsilon chains, while a peripheral stalk is formed by the delta and b chains.

It localises to the cell membrane. The enzyme catalyses ATP + H2O + 4 H(+)(in) = ADP + phosphate + 5 H(+)(out). Functionally, produces ATP from ADP in the presence of a proton gradient across the membrane. The alpha chain is a regulatory subunit. This chain is ATP synthase subunit alpha, found in Exiguobacterium sibiricum (strain DSM 17290 / CCUG 55495 / CIP 109462 / JCM 13490 / 255-15).